A 165-amino-acid chain; its full sequence is K(+)/H(+) antiporter subunit KhtT (165 aa).

One can recognise an RCK C-terminal domain in the interval 76 to 161 (LESIEMAFSD…LKKLIHDFLS (86 aa)).

In terms of assembly, the transporter is composed of the integral membrane protein KhtU and the regulatory protein KhtT.

It is found in the cell membrane. With respect to regulation, binds cyclic di-AMP (c-di-AMP), which may regulate the activity. Its function is as follows. Required for activity of the potassium/proton antiporter KhtU. Involved in protection of the cell from methylglyoxal, a toxic by-product of glycolysis. The protein is K(+)/H(+) antiporter subunit KhtT of Bacillus subtilis (strain 168).